We begin with the raw amino-acid sequence, 255 residues long: uncharacterized protein (255 aa).

Positions 1–23 (MKRLNKLVLGINLLFLVISITAG) are cleaved as a signal peptide. Cysteine 24 carries N-palmitoyl cysteine lipidation. Residue cysteine 24 is the site of S-diacylglycerol cysteine attachment.

The protein belongs to the staphylococcal tandem lipoprotein family.

The protein resides in the cell membrane. This is an uncharacterized protein from Staphylococcus aureus (strain MRSA252).